A 280-amino-acid polypeptide reads, in one-letter code: Lysosome-associated membrane glycoprotein 5 (280 aa).

An N-terminal signal peptide occupies residues 1-29; that stretch reads MDLRVRTLLGGDRLRILLMFFHVMVQTVA. Topologically, residues 30–235 are extracellular; that stretch reads EQEVENLSGL…PVDEQEQLEE (206 aa). N-linked (GlcNAc...) asparagine glycans are attached at residues Asn-35, Asn-53, Asn-102, and Asn-127. Residues 236–256 form a helical membrane-spanning segment; the sequence is TLPLILGLILGLVIVITLVIY. The Cytoplasmic portion of the chain corresponds to 257-280; sequence HIHHKMTANQVQIPRDRSQYKHMG.

It belongs to the LAMP family. In terms of processing, glycosylated. In brain, strongly expressed in the globus pallidus/ventral pallidum complex, the substantia nigra pars reticulata and the entopeduncular nucleus (at protein level). Expressed in the external plexiform layer of the olfactory bulb (at protein level). May be weakly expressed in neocortex and striatum (at protein level). Highly expressed in brain; not detected in other tissues tested. Detected in the cingulate cortex, cortical plate and caudate putamen. In neocortex, specifically expressed in neurons of layers II/III and V.

It is found in the cytoplasmic vesicle membrane. Its subcellular location is the cell membrane. The protein localises to the cell projection. The protein resides in the dendrite. It localises to the cytoplasmic vesicle. It is found in the secretory vesicle. Its subcellular location is the synaptic vesicle membrane. The protein localises to the growth cone membrane. The protein resides in the early endosome membrane. It localises to the recycling endosome. It is found in the endoplasmic reticulum-Golgi intermediate compartment membrane. Its subcellular location is the endosome membrane. Plays a role in short-term synaptic plasticity in a subset of GABAergic neurons in the brain. This chain is Lysosome-associated membrane glycoprotein 5 (Lamp5), found in Mus musculus (Mouse).